The following is a 307-amino-acid chain: Aspartate carbamoyltransferase catalytic subunit (307 aa).

The carbamoyl phosphate site is built by arginine 54 and threonine 55. Residue lysine 83 coordinates L-aspartate. The carbamoyl phosphate site is built by arginine 104, histidine 132, and glutamine 135. Residues arginine 165 and arginine 228 each contribute to the L-aspartate site. 2 residues coordinate carbamoyl phosphate: leucine 267 and proline 268.

Belongs to the aspartate/ornithine carbamoyltransferase superfamily. ATCase family. As to quaternary structure, heterododecamer (2C3:3R2) of six catalytic PyrB chains organized as two trimers (C3), and six regulatory PyrI chains organized as three dimers (R2).

It catalyses the reaction carbamoyl phosphate + L-aspartate = N-carbamoyl-L-aspartate + phosphate + H(+). It participates in pyrimidine metabolism; UMP biosynthesis via de novo pathway; (S)-dihydroorotate from bicarbonate: step 2/3. Functionally, catalyzes the condensation of carbamoyl phosphate and aspartate to form carbamoyl aspartate and inorganic phosphate, the committed step in the de novo pyrimidine nucleotide biosynthesis pathway. The protein is Aspartate carbamoyltransferase catalytic subunit of Clostridium perfringens (strain SM101 / Type A).